Here is an 808-residue protein sequence, read N- to C-terminus: Tegument protein UL47 homolog (808 aa).

Disordered stretches follow at residues 1 to 21 and 77 to 266; these read MQMP…RENQ and PNEE…SFGE. Residues 83-92 are compositionally biased toward basic and acidic residues; sequence DNSRGRDRTR. The span at 133–160 shows a compositional bias: basic residues; sequence SRARSRRRSSSRRRHRNASMHMHFRGGS. Residues 162-171 are compositionally biased toward polar residues; it reads RSATGSQNLI. A compositionally biased stretch (basic residues) spans 197–214; it reads RSSRVRRRHRRSSRRRGP. Residues 235-259 show a composition bias toward basic and acidic residues; sequence PISDIDQKRLRKNSDTSSRGTRESP.

This sequence belongs to the alphaherpesvirinae HHV-1 UL47 family. As to quaternary structure, interacts with US3 kinase. Interacts with UL31 and UL34; these interactions seem important for efficient virion nuclear egress. Interacts with UL41/VHS. Phosphorylated by US3. This phosphorylation is required for proper nuclear localization. Post-translationally, O-glycosylated.

Its subcellular location is the virion tegument. The protein localises to the host nucleus. It localises to the host cytoplasm. In terms of biological role, tegument protein that can bind to various RNA transcripts. Plays a role in the attenuation of selective viral and cellular mRNA degradation by modulating the activity of host shutoff RNase UL41/VHS. Also plays a role in the primary envelopment of virions in the perinuclear space, probably by interacting with two nuclear egress proteins UL31 and UL34. Plays an important role in the splicing of glycoprotein/gC transcripts and thereby participates in bird-to-bird viral transmission. This is Tegument protein UL47 homolog (MDV060) from Gallus gallus (Chicken).